The primary structure comprises 422 residues: Enolase (422 aa).

A Mg(2+)-binding site is contributed by Ser41. Glu163 contributes to the (2R)-2-phosphoglycerate binding site. The active-site Proton donor is Glu204. Residues Asp241, Glu284, and Asp311 each contribute to the Mg(2+) site. Lys336 serves as the catalytic Proton acceptor. Residues Arg365, Ser366, and Lys387 each coordinate (2R)-2-phosphoglycerate.

This sequence belongs to the enolase family. Homodimer. Component of the RNA degradosome, a multiprotein complex involved in RNA processing and mRNA degradation. Mg(2+) is required as a cofactor.

Its subcellular location is the cytoplasm. It localises to the secreted. It is found in the cell surface. It catalyses the reaction (2R)-2-phosphoglycerate = phosphoenolpyruvate + H2O. It functions in the pathway carbohydrate degradation; glycolysis; pyruvate from D-glyceraldehyde 3-phosphate: step 4/5. Catalyzes the reversible conversion of 2-phosphoglycerate (2-PG) into phosphoenolpyruvate (PEP). It is essential for the degradation of carbohydrates via glycolysis. This Legionella pneumophila subsp. pneumophila (strain Philadelphia 1 / ATCC 33152 / DSM 7513) protein is Enolase.